A 205-amino-acid polypeptide reads, in one-letter code: Thymidine kinase (205 aa).

ATP contacts are provided by residues 9-16 and 87-90; these read SAMNAGKS and DECQ. The Proton acceptor role is filled by glutamate 88. Residues cysteine 145, cysteine 147, cysteine 182, and histidine 185 each contribute to the Zn(2+) site.

This sequence belongs to the thymidine kinase family. As to quaternary structure, homotetramer.

It localises to the cytoplasm. The catalysed reaction is thymidine + ATP = dTMP + ADP + H(+). With respect to regulation, allosteric enzyme which is feedback inhibited by dTTP and activated by a number of dNDP and dNTP. Functionally, phosphorylates both thymidine and deoxyuridine. The sequence is that of Thymidine kinase from Escherichia coli O157:H7.